The chain runs to 145 residues: D-aminoacyl-tRNA deacylase (145 aa).

A Gly-cisPro motif, important for rejection of L-amino acids motif is present at residues 137–138; sequence GP.

Belongs to the DTD family. Homodimer.

It localises to the cytoplasm. The enzyme catalyses glycyl-tRNA(Ala) + H2O = tRNA(Ala) + glycine + H(+). It catalyses the reaction a D-aminoacyl-tRNA + H2O = a tRNA + a D-alpha-amino acid + H(+). Its function is as follows. An aminoacyl-tRNA editing enzyme that deacylates mischarged D-aminoacyl-tRNAs. Also deacylates mischarged glycyl-tRNA(Ala), protecting cells against glycine mischarging by AlaRS. Acts via tRNA-based rather than protein-based catalysis; rejects L-amino acids rather than detecting D-amino acids in the active site. By recycling D-aminoacyl-tRNA to D-amino acids and free tRNA molecules, this enzyme counteracts the toxicity associated with the formation of D-aminoacyl-tRNA entities in vivo and helps enforce protein L-homochirality. The protein is D-aminoacyl-tRNA deacylase of Pseudomonas aeruginosa (strain LESB58).